The following is a 97-amino-acid chain: MDWLREAADGSLVLSLHVQPGAKKTEFVGPHGEAMKLRLAAPPVDGKANAALTVFLAAFCGVGRSAVSLLSGETSRAKRVRIEGAGSEALARLRALG.

The protein belongs to the UPF0235 family.

This is UPF0235 protein AZOSEA09540 from Aromatoleum aromaticum (strain DSM 19018 / LMG 30748 / EbN1) (Azoarcus sp. (strain EbN1)).